Reading from the N-terminus, the 203-residue chain is MKTFLPCLFFLLILVGCAQRPTPPATKTADWAAHQQQLNDLTDWSLRGKIAIITPENRHSLNIYWQQSGDNFHITLTSFLGSTILDVKKTALSTRIIDDQGKIYFGKNTQTLMTRLSGIELPVEVLQQWIKGNPIGAVYQLNENNQLVSLTGQDNKNENWSANYQDYKTVQEISLPHQLKLTRQDLLIKFAIQKWLLEKTEIF.

The signal sequence occupies residues Met1–Gly16. Cys17 carries the N-palmitoyl cysteine lipid modification. A lipid anchor (S-diacylglycerol cysteine) is attached at Cys17.

This sequence belongs to the LolB family. Monomer.

Its subcellular location is the cell outer membrane. In terms of biological role, plays a critical role in the incorporation of lipoproteins in the outer membrane after they are released by the LolA protein. In Psychromonas ingrahamii (strain DSM 17664 / CCUG 51855 / 37), this protein is Outer-membrane lipoprotein LolB.